The primary structure comprises 378 residues: Erythronate-4-phosphate dehydrogenase (378 aa).

Residues Ser-45 and Thr-66 each coordinate substrate. 2 residues coordinate NAD(+): Asp-146 and Thr-175. Arg-208 is an active-site residue. Asp-232 is an NAD(+) binding site. Glu-237 is a catalytic residue. His-254 (proton donor) is an active-site residue. Residue Gly-257 participates in NAD(+) binding. Tyr-258 serves as a coordination point for substrate.

It belongs to the D-isomer specific 2-hydroxyacid dehydrogenase family. PdxB subfamily. In terms of assembly, homodimer.

The protein localises to the cytoplasm. The enzyme catalyses 4-phospho-D-erythronate + NAD(+) = (R)-3-hydroxy-2-oxo-4-phosphooxybutanoate + NADH + H(+). It functions in the pathway cofactor biosynthesis; pyridoxine 5'-phosphate biosynthesis; pyridoxine 5'-phosphate from D-erythrose 4-phosphate: step 2/5. Catalyzes the oxidation of erythronate-4-phosphate to 3-hydroxy-2-oxo-4-phosphonooxybutanoate. The protein is Erythronate-4-phosphate dehydrogenase of Shigella dysenteriae serotype 1 (strain Sd197).